The sequence spans 364 residues: Aminomethyltransferase (364 aa).

The protein belongs to the GcvT family. The glycine cleavage system is composed of four proteins: P, T, L and H.

It catalyses the reaction N(6)-[(R)-S(8)-aminomethyldihydrolipoyl]-L-lysyl-[protein] + (6S)-5,6,7,8-tetrahydrofolate = N(6)-[(R)-dihydrolipoyl]-L-lysyl-[protein] + (6R)-5,10-methylene-5,6,7,8-tetrahydrofolate + NH4(+). Functionally, the glycine cleavage system catalyzes the degradation of glycine. The polypeptide is Aminomethyltransferase (Shewanella denitrificans (strain OS217 / ATCC BAA-1090 / DSM 15013)).